We begin with the raw amino-acid sequence, 234 residues long: Small ribosomal subunit protein eS1y (234 aa).

Positions methionine 1–lysine 18 are enriched in basic residues. The segment at methionine 1–alanine 20 is disordered.

Belongs to the eukaryotic ribosomal protein eS1 family. Component of the small ribosomal subunit. Mature ribosomes consist of a small (40S) and a large (60S) subunit. The 40S subunit contains about 33 different proteins and 1 molecule of RNA (18S). The 60S subunit contains about 49 different proteins and 3 molecules of RNA (25S, 5.8S and 5S).

Its subcellular location is the cytoplasm. This Vitis vinifera (Grape) protein is Small ribosomal subunit protein eS1y.